Reading from the N-terminus, the 182-residue chain is Ribosome maturation factor RimM (182 aa).

Residues 103 to 182 (EDEFYWRELF…RIEVDWDPGF (80 aa)) form the PRC barrel domain.

Belongs to the RimM family. As to quaternary structure, binds ribosomal protein uS19.

It is found in the cytoplasm. Functionally, an accessory protein needed during the final step in the assembly of 30S ribosomal subunit, possibly for assembly of the head region. Essential for efficient processing of 16S rRNA. May be needed both before and after RbfA during the maturation of 16S rRNA. It has affinity for free ribosomal 30S subunits but not for 70S ribosomes. The sequence is that of Ribosome maturation factor RimM from Vibrio parahaemolyticus serotype O3:K6 (strain RIMD 2210633).